The sequence spans 483 residues: MDKYIYVTGILNPNEARDEVFSVVNKGYIGPGGRSFSNRGSKYTVVWENSAARISGFTSTSQSTIDAFAYFLLKGGLTTTLSNPINCENWVRSSKDLSAFFRTLIKGKIYASRSVDSNLPKKDRDDIMEASRRLSPSDAAFCRAVSVQVGKYVDVTQNLESTIVPLRVMEIKKRRGSAHVSLPKVVSAYVDFYTNLQELLSDEVTRARTDTVSAYATDSMAFLVKMLPLTAREQWLKDVLGYLLVRRRPANFSYDVRVAWVYDVIATLKLVIRLFFNKDTPGGIKDLKPCVPIESFDPFHELSSYFSRLSYEMTTGKGGKICPEIAEKLVRRLMEENYKLRLTPVMALIIILVYYSIYGTNATRIKRRPDFLNVRIKGRVEKVSLRGVEDRAFRISEKRGINAQRVLCRYYSDLTCLARRHYGIRRNNWKTLSYVDGTLAYDTADCITSKVRNTINTADHASIIHYIKTNENQVTGTTLPHQL.

The helical transmembrane segment at L342–G359 threads the bilayer.

It localises to the host membrane. The sequence is that of Protein P55 from Vitis vinifera (Grape).